The chain runs to 759 residues: Protein AKNAD1 (759 aa).

Residues 169–246 are disordered; sequence TDQLNPKKDG…HTEKASSGNR (78 aa). Residues 181 to 192 show a composition bias toward polar residues; that stretch reads SNKPGSPTMTEE. Positions 371 to 482 form a coiled coil; that stretch reads QKISQGKQMC…EDVKDKVDES (112 aa). Over residues 484 to 496 the composition is skewed to polar residues; sequence YTSAPSLPVSSPV. Disordered stretches follow at residues 484–543, 634–654, 678–723, and 735–759; these read YTSA…QEAP, EKAP…FCSD, CRKE…PSLA, and PDTS…MKSQ. Residues 497 to 509 are compositionally biased toward low complexity; sequence TLDDLASTSSSLS. A compositionally biased stretch (polar residues) spans 639–654; sequence SDSTPNSDTGHSFCSD. A compositionally biased stretch (basic and acidic residues) spans 679–688; the sequence is RKEPPKEFHY. Residues 735 to 744 show a composition bias toward polar residues; it reads PDTSKSSPTP.

It belongs to the AKNA family.

The protein is Protein AKNAD1 (AKNAD1) of Macaca fascicularis (Crab-eating macaque).